Consider the following 72-residue polypeptide: Putative snRNP Sm-like protein (72 aa).

The Sm domain occupies 4–72 (RPLDILNNAL…RGDNVVYVSP (69 aa)).

This sequence belongs to the snRNP Sm proteins family.

The polypeptide is Putative snRNP Sm-like protein (Methanosarcina acetivorans (strain ATCC 35395 / DSM 2834 / JCM 12185 / C2A)).